We begin with the raw amino-acid sequence, 147 residues long: Large ribosomal subunit protein uL15 (147 aa).

Positions Met1–Gly28 are enriched in basic residues. Residues Met1–Asn43 form a disordered region. Over residues Gly29–Gly38 the composition is skewed to gly residues.

It belongs to the universal ribosomal protein uL15 family. Part of the 50S ribosomal subunit.

Binds to the 23S rRNA. In Pyrococcus horikoshii (strain ATCC 700860 / DSM 12428 / JCM 9974 / NBRC 100139 / OT-3), this protein is Large ribosomal subunit protein uL15.